A 525-amino-acid chain; its full sequence is Probable CoA ligase CCL9 (525 aa).

ATP-binding positions include Thr-171–Lys-179, Glu-311–Thr-316, Asp-395, Leu-407–Arg-410, and Lys-501. Residues Ser-242–Glu-311 form an SBD1 region. The SBD2 stretch occupies residues Ala-312 to Tyr-375.

Belongs to the ATP-dependent AMP-binding enzyme family.

The protein localises to the cytoplasm. It localises to the cytosol. This Humulus lupulus (European hop) protein is Probable CoA ligase CCL9.